We begin with the raw amino-acid sequence, 155 residues long: MTDAQTPSEDLPQLQVNMQYIKDLSFEIPGAPHSFIEMQGKNPEIPIHVDVNVGNVGANAYEVVLHLKIEALLDGKALFILELAYAGVFTLNLPEEQIHPVLLIECPRLLFPFARNIVADMTRDGGLPPLLLQPLDFVELYRARAAEMNAQQGQA.

Belongs to the SecB family. As to quaternary structure, homotetramer, a dimer of dimers. One homotetramer interacts with 1 SecA dimer.

It is found in the cytoplasm. One of the proteins required for the normal export of preproteins out of the cell cytoplasm. It is a molecular chaperone that binds to a subset of precursor proteins, maintaining them in a translocation-competent state. It also specifically binds to its receptor SecA. The sequence is that of Protein-export protein SecB from Paramagnetospirillum magneticum (strain ATCC 700264 / AMB-1) (Magnetospirillum magneticum).